The following is a 756-amino-acid chain: Disintegrin and metalloproteinase domain-containing protein 5 (756 aa).

The N-terminal stretch at 1 to 16 (MFLLLVLLTGLGGMHA) is a signal peptide. A propeptide spanning residues 17 to 142 (DLNPHKTFLQ…AVSGFIHKIY (126 aa)) is cleaved from the precursor. Residues 17 to 698 (DLNPHKTFLQ…GRHAPFQKQR (682 aa)) lie on the Extracellular side of the membrane. The 198-residue stretch at 183–380 (RYIEMHIVVD…NGLTCLQTNP (198 aa)) folds into the Peptidase M12B domain. Cystine bridges form between C292-C375, C334-C359, C336-C341, and C449-C470. The region spanning 389-478 (RRICGNGLLE…YCLLDTYVRD (90 aa)) is the Disintegrin domain. The N-linked (GlcNAc...) asparagine glycan is linked to N559. Residues 630–664 (DFETCEASIECSGHGICNNFNHCHCEKGYNPPHCK) form the EGF-like domain. 3 disulfide bridges follow: C634–C646, C640–C652, and C654–C663. The helical transmembrane segment at 699-719 (FQLIFYISLPVLIITTAILIK) threads the bilayer. Residues 720-756 (RKKLRELCYRGETESESSVSQESSSNSKSSLSESTSL) are Cytoplasmic-facing. The disordered stretch occupies residues 731–756 (ETESESSVSQESSSNSKSSLSESTSL). A compositionally biased stretch (low complexity) spans 735-756 (ESSVSQESSSNSKSSLSESTSL).

Interacts with TEX101. Post-translationally, subject to proteolytic processing during epididymal transit of spermatozoa. In terms of tissue distribution, detected in testis (at protein level). Detected in adult and prepubertal testis. Detected at very low levels in heart, kidney, brain, muscle ovary and uterus.

It localises to the membrane. Its function is as follows. This is a non catalytic metalloprotease-like protein. May play a role in sperm-egg fusion. The protein is Disintegrin and metalloproteinase domain-containing protein 5 (ADAM5) of Macaca fascicularis (Crab-eating macaque).